The following is a 968-amino-acid chain: Phosphoenolpyruvate carboxylase 3 (968 aa).

The residue at position 11 (serine 11) is a Phosphoserine. Residues histidine 173 and lysine 603 contribute to the active site. Serine 705 carries the post-translational modification Phosphoserine.

It belongs to the PEPCase type 1 family. As to quaternary structure, homotetramer. It depends on Mg(2+) as a cofactor. Expressed in roots and siliques, and to a lower extent in stems, leaves and flowers.

The protein resides in the cytoplasm. The catalysed reaction is oxaloacetate + phosphate = phosphoenolpyruvate + hydrogencarbonate. Its activity is regulated as follows. By light-reversible phosphorylation. In terms of biological role, through the carboxylation of phosphoenolpyruvate (PEP) it forms oxaloacetate, a four-carbon dicarboxylic acid source for the tricarboxylic acid cycle. This chain is Phosphoenolpyruvate carboxylase 3 (PPC3), found in Arabidopsis thaliana (Mouse-ear cress).